A 382-amino-acid polypeptide reads, in one-letter code: Protein farnesyltransferase subunit beta (382 aa).

PFTB repeat units lie at residues 78 to 119 (CERA…CLCD), 129 to 170 (RDRL…SLVG), 178 to 219 (FEGT…ALLG), 226 to 268 (EIKL…VIVA), and 286 to 328 (PEKL…SSIA). Residues 204 to 207 (HGGY) and 247 to 250 (RSNK) contribute to the (2E,6E)-farnesyl diphosphate site. Zn(2+)-binding residues include aspartate 253 and cysteine 255. 256 to 259 (YSWW) contributes to the (2E,6E)-farnesyl diphosphate binding site. Histidine 316 lines the Zn(2+) pocket.

This sequence belongs to the protein prenyltransferase subunit beta family. As to quaternary structure, heterodimer of an alpha(cwp1) and a beta(cpp1) subunit. It depends on Zn(2+) as a cofactor.

It catalyses the reaction L-cysteinyl-[protein] + (2E,6E)-farnesyl diphosphate = S-(2E,6E)-farnesyl-L-cysteinyl-[protein] + diphosphate. Its function is as follows. Catalyzes the transfer of a farnesyl moiety from farnesyl diphosphate to a cysteine at the fourth position from the C-terminus of several proteins. The beta(cpp1) subunit is responsible for peptide-binding. The protein is Protein farnesyltransferase subunit beta (cpp1) of Schizosaccharomyces pombe (strain 972 / ATCC 24843) (Fission yeast).